A 372-amino-acid polypeptide reads, in one-letter code: NAD(P)H-quinone oxidoreductase subunit 1 (372 aa).

Helical transmembrane passes span 27 to 47 (AIWM…GVLV), 97 to 117 (WLFT…FLIV), 128 to 148 (VGMG…GLLM), 166 to 186 (AAQS…IAMM), 204 to 224 (ILGW…IAAL), 249 to 269 (YSGM…ILSS), 308 to 328 (SLGI…AILL), and 351 to 371 (VGLV…FAFG).

It belongs to the complex I subunit 1 family. NDH-1 is composed of at least 11 different subunits.

The protein resides in the cellular thylakoid membrane. It catalyses the reaction a plastoquinone + NADH + (n+1) H(+)(in) = a plastoquinol + NAD(+) + n H(+)(out). It carries out the reaction a plastoquinone + NADPH + (n+1) H(+)(in) = a plastoquinol + NADP(+) + n H(+)(out). Its function is as follows. NDH-1 shuttles electrons from an unknown electron donor, via FMN and iron-sulfur (Fe-S) centers, to quinones in the respiratory and/or the photosynthetic chain. The immediate electron acceptor for the enzyme in this species is believed to be plastoquinone. Couples the redox reaction to proton translocation, and thus conserves the redox energy in a proton gradient. This Nostoc punctiforme (strain ATCC 29133 / PCC 73102) protein is NAD(P)H-quinone oxidoreductase subunit 1.